Here is a 395-residue protein sequence, read N- to C-terminus: Chalcone synthase 3 (395 aa).

At valine 2 the chain carries N-acetylvaline. Residue cysteine 169 is part of the active site.

Belongs to the thiolase-like superfamily. Chalcone/stilbene synthases family.

It carries out the reaction (E)-4-coumaroyl-CoA + 3 malonyl-CoA + 3 H(+) = 2',4,4',6'-tetrahydroxychalcone + 3 CO2 + 4 CoA. It functions in the pathway secondary metabolite biosynthesis; flavonoid biosynthesis. Its function is as follows. The primary product of this enzyme is 4,2',4',6'-tetrahydroxychalcone (also termed naringenin-chalcone or chalcone) which can under specific conditions spontaneously isomerize into naringenin. This chain is Chalcone synthase 3 (CHS3), found in Sinapis alba (White mustard).